Reading from the N-terminus, the 256-residue chain is Protein CUSTOS (256 aa).

A compositionally biased stretch (low complexity) spans 1–19; it reads MVAPSGAMSDSENSSSSSS. 3 disordered regions span residues 1–83, 127–163, and 227–256; these read MVAP…TPEF, FTSI…QRCR, and IQKK…KPEN. Phosphoserine is present on Ser62. Over residues 63-83 the composition is skewed to basic and acidic residues; sequence RRHEVNQHEEDGNDLRTTPEF. At Thr80 the chain carries Phosphothreonine. Ser139 carries the phosphoserine modification. The short motif at 228 to 235 is the Nucleolar localization signal (NLS) element; it reads QKKRKKKA. Over residues 228–237 the composition is skewed to basic residues; that stretch reads QKKRKKKAKK. Residues 246-256 show a composition bias toward low complexity; that stretch reads PAECAAAKPEN.

Belongs to the CUSTOS family.

Its subcellular location is the nucleus envelope. Plays a role in the regulation of Wnt signaling pathway during early development. This Mus musculus (Mouse) protein is Protein CUSTOS.